The following is a 68-amino-acid chain: Conotoxin Cal12.1p3 (68 aa).

A propeptide spanning residues 1–21 is cleaved from the precursor; sequence DLITNSYTRGKPRHVTSWPKL.

Contains 4 disulfide bonds. In terms of tissue distribution, expressed by the venom duct.

Its subcellular location is the secreted. The protein is Conotoxin Cal12.1p3 of Californiconus californicus (California cone).